The chain runs to 631 residues: Nucleoside triphosphatase I (631 aa).

The 163-residue stretch at 42 to 204 folds into the Helicase ATP-binding domain; that stretch reads FLGLDSMHSL…TMLVNLLRPG (163 aa). An ATP-binding site is contributed by 55–62; it reads HETGVGKT. The DEXH box signature appears at 141-144; it reads DECH. One can recognise a Helicase C-terminal domain in the interval 367 to 532; that stretch reads KFIDVCLGIL…EFVQLFRVFK (166 aa). The tract at residues 457–524 is binding to the cap-specific mRNA (nucleoside-2'-O-)-methyltransferase; sequence DIFILDMTWN…EIIQSKSKEF (68 aa).

This sequence belongs to the helicase family. NPH I subfamily. In terms of assembly, monomer. Interacts (via C-terminus) with RAP94/OPG109 (via N-terminus). Interacts with the cap-specific mRNA (nucleoside-2'-O-)-methyltransferase OPG102.

Its subcellular location is the virion. It catalyses the reaction a ribonucleoside 5'-triphosphate + H2O = a ribonucleoside 5'-diphosphate + phosphate + H(+). In terms of biological role, DNA-dependent ATPase that acts as a 5' to 3' translocase on single-stranded DNA and thereby plays a role in transcription termination of viral early genes. Uses forward translocation in concert with the viral RNA polymerase RAP94/OPG109 subunit and the capping enzyme/VTF to catalyze release of UUUUUNU-containing nascent RNA from the elongation complex. In addition, acts as a positive elongation factor to assist transcription through problematic sequences. The sequence is that of Nucleoside triphosphatase I (OPG123) from Variola virus (isolate Human/India/Ind3/1967) (VARV).